Reading from the N-terminus, the 372-residue chain is Enolase (372 aa).

2 residues coordinate substrate: His-95 and Glu-104. Glu-147 functions as the Proton donor in the catalytic mechanism. Mg(2+) is bound by residues Asp-182, Glu-232, and Asp-257. 2 residues coordinate substrate: Glu-232 and Asp-257. Catalysis depends on Lys-282, which acts as the Proton acceptor. Substrate-binding positions include 309 to 312 (SHRS) and Lys-333.

This sequence belongs to the enolase family. In terms of assembly, homodimer. The cofactor is Mg(2+).

It localises to the cytoplasm. The catalysed reaction is (2R)-2-phosphoglycerate = phosphoenolpyruvate + H2O. Its pathway is carbohydrate degradation; glycolysis; pyruvate from D-glyceraldehyde 3-phosphate: step 4/5. The protein is Enolase (ENO) of Chlamydomonas reinhardtii (Chlamydomonas smithii).